The chain runs to 259 residues: Putative protein-tyrosine sulfotransferase (259 aa).

Cys-13 and Cys-68 are oxidised to a cystine. Glu-16 (proton donor/acceptor) is an active-site residue. N-linked (GlcNAc...) asparagine glycosylation occurs at Asn-36. Residues Arg-95, Ser-103, and Arg-107 each coordinate 3'-phosphoadenylyl sulfate. A glycan (N-linked (GlcNAc...) asparagine) is linked at Asn-115. Cys-137 and Cys-144 are joined by a disulfide. 3'-phosphoadenylyl sulfate is bound by residues Tyr-149 and 194-203 (SASQVKNSIN).

It belongs to the protein sulfotransferase family.

It carries out the reaction L-tyrosyl-[protein] + 3'-phosphoadenylyl sulfate = O-sulfo-L-tyrosine-[protein] + adenosine 3',5'-bisphosphate + H(+). Functionally, catalyzes the O-sulfation of tyrosine residues within acidic motifs of polypeptides, using 3'-phosphoadenylyl sulfate (PAPS) as cosubstrate. The polypeptide is Putative protein-tyrosine sulfotransferase (tpst-2) (Caenorhabditis elegans).